Consider the following 311-residue polypeptide: Porphobilinogen deaminase (311 aa).

Cys242 is subject to S-(dipyrrolylmethanemethyl)cysteine.

It belongs to the HMBS family. As to quaternary structure, monomer. Dipyrromethane serves as cofactor.

It catalyses the reaction 4 porphobilinogen + H2O = hydroxymethylbilane + 4 NH4(+). It functions in the pathway porphyrin-containing compound metabolism; protoporphyrin-IX biosynthesis; coproporphyrinogen-III from 5-aminolevulinate: step 2/4. In terms of biological role, tetrapolymerization of the monopyrrole PBG into the hydroxymethylbilane pre-uroporphyrinogen in several discrete steps. The chain is Porphobilinogen deaminase (hemC) from Neisseria meningitidis serogroup A / serotype 4A (strain DSM 15465 / Z2491).